A 178-amino-acid chain; its full sequence is ATP-dependent protease subunit HslV (178 aa).

Residue Thr-8 is part of the active site. Gly-163, Cys-166, and Thr-169 together coordinate Na(+).

This sequence belongs to the peptidase T1B family. HslV subfamily. In terms of assembly, a double ring-shaped homohexamer of HslV is capped on each side by a ring-shaped HslU homohexamer. The assembly of the HslU/HslV complex is dependent on binding of ATP.

Its subcellular location is the cytoplasm. The enzyme catalyses ATP-dependent cleavage of peptide bonds with broad specificity.. With respect to regulation, allosterically activated by HslU binding. Functionally, protease subunit of a proteasome-like degradation complex believed to be a general protein degrading machinery. The protein is ATP-dependent protease subunit HslV of Xylella fastidiosa (strain 9a5c).